The primary structure comprises 402 residues: Formate-dependent phosphoribosylglycinamide formyltransferase (402 aa).

Residues 23 to 24 (EL) and glutamate 83 each bind N(1)-(5-phospho-beta-D-ribosyl)glycinamide. ATP is bound by residues arginine 116, lysine 157, 162-167 (SSGKGQ), 197-200 (ESQI), and glutamate 205. Residues 121-316 (RLAAEELGLP…EFELHARAIL (196 aa)) form the ATP-grasp domain. Mg(2+)-binding residues include glutamate 275 and glutamate 287. Residues aspartate 294, lysine 363, and 370 to 371 (RR) contribute to the N(1)-(5-phospho-beta-D-ribosyl)glycinamide site.

Belongs to the PurK/PurT family. In terms of assembly, homodimer.

The catalysed reaction is N(1)-(5-phospho-beta-D-ribosyl)glycinamide + formate + ATP = N(2)-formyl-N(1)-(5-phospho-beta-D-ribosyl)glycinamide + ADP + phosphate + H(+). Its pathway is purine metabolism; IMP biosynthesis via de novo pathway; N(2)-formyl-N(1)-(5-phospho-D-ribosyl)glycinamide from N(1)-(5-phospho-D-ribosyl)glycinamide (formate route): step 1/1. Involved in the de novo purine biosynthesis. Catalyzes the transfer of formate to 5-phospho-ribosyl-glycinamide (GAR), producing 5-phospho-ribosyl-N-formylglycinamide (FGAR). Formate is provided by PurU via hydrolysis of 10-formyl-tetrahydrofolate. In Acinetobacter baumannii (strain ATCC 17978 / DSM 105126 / CIP 53.77 / LMG 1025 / NCDC KC755 / 5377), this protein is Formate-dependent phosphoribosylglycinamide formyltransferase.